The chain runs to 140 residues: Large ribosomal subunit protein uL14 (140 aa).

The protein belongs to the universal ribosomal protein uL14 family. As to quaternary structure, component of the large ribosomal subunit.

It is found in the cytoplasm. In terms of biological role, component of the large ribosomal subunit. The ribosome is a large ribonucleoprotein complex responsible for the synthesis of proteins in the cell. This Danio rerio (Zebrafish) protein is Large ribosomal subunit protein uL14 (rpl23).